The sequence spans 259 residues: MQLQLICEDAALQPYLDAIASKWQLTHDAHSHFALVLTFERLELRKLDEPKLGAIYVDLAGGAVAHRRKFGGGKGQAIAKAAGLNKGATPTVLDGTAGLGRDAFVLASLGCKVQMVERNPVVAALLDDGLTRAKKDDEIGAWVSERMSLLHASSHDALAALASDAEFVHPDVVYLDPMYPHPENKKKTALVKKEMRVFQSLVGADTDADALLTPALALATKRVVVKRPDYAEWLDGVKPSMAIETKKNRFDVYVNASMS.

Residues 101–102 (RD), 117–118 (ER), 153–154 (SS), and Asp176 contribute to the S-adenosyl-L-methionine site.

The protein belongs to the methyltransferase superfamily. RsmJ family.

Its subcellular location is the cytoplasm. It carries out the reaction guanosine(1516) in 16S rRNA + S-adenosyl-L-methionine = N(2)-methylguanosine(1516) in 16S rRNA + S-adenosyl-L-homocysteine + H(+). In terms of biological role, specifically methylates the guanosine in position 1516 of 16S rRNA. In Vibrio vulnificus (strain YJ016), this protein is Ribosomal RNA small subunit methyltransferase J.